A 273-amino-acid polypeptide reads, in one-letter code: 4-hydroxy-tetrahydrodipicolinate reductase (273 aa).

NAD(+)-binding positions include 11-16 and 106-108; these read GALGRM and GTT. His162 (proton donor/acceptor) is an active-site residue. Residue His163 participates in (S)-2,3,4,5-tetrahydrodipicolinate binding. Lys166 functions as the Proton donor in the catalytic mechanism. 172 to 173 lines the (S)-2,3,4,5-tetrahydrodipicolinate pocket; sequence GT.

Belongs to the DapB family.

Its subcellular location is the cytoplasm. The enzyme catalyses (S)-2,3,4,5-tetrahydrodipicolinate + NAD(+) + H2O = (2S,4S)-4-hydroxy-2,3,4,5-tetrahydrodipicolinate + NADH + H(+). It carries out the reaction (S)-2,3,4,5-tetrahydrodipicolinate + NADP(+) + H2O = (2S,4S)-4-hydroxy-2,3,4,5-tetrahydrodipicolinate + NADPH + H(+). The protein operates within amino-acid biosynthesis; L-lysine biosynthesis via DAP pathway; (S)-tetrahydrodipicolinate from L-aspartate: step 4/4. Functionally, catalyzes the conversion of 4-hydroxy-tetrahydrodipicolinate (HTPA) to tetrahydrodipicolinate. This Synechococcus sp. (strain RCC307) protein is 4-hydroxy-tetrahydrodipicolinate reductase.